A 37-amino-acid polypeptide reads, in one-letter code: Tick defensin 2 (37 aa).

3 disulfide bridges follow: C4–C26, C11–C34, and C15–C36.

This sequence belongs to the invertebrate defensin family.

The protein resides in the secreted. In terms of biological role, antibacterial peptide mostly active against Gram-positive bacteria (MIC=0.24 ug/ml on Bacillus subtilis, and MIC=0.94 ug/ml on Micrococcus luteus, MIC&gt;120 ug/ml on both Escherichia coli and Pseudomonas aeruginosa). The polypeptide is Tick defensin 2 (Ornithodoros savignyi (African eyed tampan)).